The following is a 231-amino-acid chain: Large ribosomal subunit protein uL1 (231 aa).

It belongs to the universal ribosomal protein uL1 family. Part of the 50S ribosomal subunit.

Its function is as follows. Binds directly to 23S rRNA. The L1 stalk is quite mobile in the ribosome, and is involved in E site tRNA release. In terms of biological role, protein L1 is also a translational repressor protein, it controls the translation of the L11 operon by binding to its mRNA. This Saccharophagus degradans (strain 2-40 / ATCC 43961 / DSM 17024) protein is Large ribosomal subunit protein uL1.